Reading from the N-terminus, the 204-residue chain is Small ribosomal subunit protein uS7 (204 aa).

It belongs to the universal ribosomal protein uS7 family. As to quaternary structure, part of the 30S ribosomal subunit.

Functionally, one of the primary rRNA binding proteins, it binds directly to 16S rRNA where it nucleates assembly of the head domain of the 30S subunit. Is located at the subunit interface close to the decoding center. This is Small ribosomal subunit protein uS7 from Methanoregula boonei (strain DSM 21154 / JCM 14090 / 6A8).